The primary structure comprises 198 residues: Eukaryotic translation initiation factor isoform 4E (198 aa).

The disordered stretch occupies residues 1-25 (MATDDVNEPLPAAAELPATEAEKQP). Alanine 2 carries the post-translational modification N-acetylalanine. A compositionally biased stretch (low complexity) spans 8–19 (EPLPAAAELPAT). MRNA is bound by residues 46–47 (WG) and 92–93 (WE). A disulfide bridge links cysteine 97 with cysteine 138. 145 to 152 (RPQSKQDK) is a binding site for mRNA.

The protein belongs to the eukaryotic initiation factor 4E family. As to quaternary structure, EIF4F is a multi-subunit complex, the composition of which varies with external and internal environmental conditions. It is composed of at least EIF4A, EIF4E and EIF4G. EIF4E is also known to interact with other partners. In higher plants two isoforms of EIF4F have been identified, named isoform EIF4F and isoform EIF(iso)4F. Isoform EIF4F has subunits p220 and p26, whereas isoform EIF(iso)4F has subunits p82 and p28. This isoform interacts with the viral protein genome linked (VPg)-proteinase of turnip mosaic potyvirus. Interacts directly with LOX2. Interacts with BTF3. Post-translationally, according to the redox status, the Cys-97-Cys-138 disulfide bridge may have a role in regulating protein function by affecting its ability to bind capped mRNA. Abundant in floral organs and in young developing tissues.

Functionally, recognizes and binds the 7-methylguanosine-containing mRNA cap during an early step in the initiation of protein synthesis and facilitates ribosome binding by inducing the unwinding of the mRNAs secondary structures. Mediates susceptibility to Turnipmosaic potyvirus (TuMV) and Tobacco etch potyvirus (TEV). This chain is Eukaryotic translation initiation factor isoform 4E (EIF(ISO)4E), found in Arabidopsis thaliana (Mouse-ear cress).